The following is a 549-amino-acid chain: Hydroxylamine reductase (549 aa).

[4Fe-4S] cluster-binding residues include Cys-3, Cys-6, Cys-15, and Cys-21. Hybrid [4Fe-2O-2S] cluster contacts are provided by His-248, Glu-272, Cys-316, Cys-403, Cys-431, Cys-456, Glu-490, and Lys-492. Cys-403 bears the Cysteine persulfide mark.

Belongs to the HCP family. [4Fe-4S] cluster is required as a cofactor. The cofactor is hybrid [4Fe-2O-2S] cluster.

Its subcellular location is the cytoplasm. The enzyme catalyses A + NH4(+) + H2O = hydroxylamine + AH2 + H(+). Catalyzes the reduction of hydroxylamine to form NH(3) and H(2)O. This is Hydroxylamine reductase from Rhodospirillum rubrum (strain ATCC 11170 / ATH 1.1.1 / DSM 467 / LMG 4362 / NCIMB 8255 / S1).